We begin with the raw amino-acid sequence, 196 residues long: Venom platylysin (196 aa).

The protein belongs to the redulysin-like family. As to expression, expressed by the venom gland.

It localises to the secreted. Probable insecticidal toxin that has been detected in a semi-pure insecticidal fraction. This chain is Venom platylysin, found in Platymeris biguttatus (Two-spotted assassin bug).